We begin with the raw amino-acid sequence, 146 residues long: Large ribosomal subunit protein uL15 (146 aa).

Residues 1–13 (MKLHELKPAEGSR) are compositionally biased toward basic and acidic residues. The interval 1-48 (MKLHELKPAEGSRKVRNRVGRGIGSGNGKTAGKGHKGQNARSGGGVRL) is disordered. A compositionally biased stretch (gly residues) spans 21 to 31 (RGIGSGNGKTA).

This sequence belongs to the universal ribosomal protein uL15 family. As to quaternary structure, part of the 50S ribosomal subunit.

In terms of biological role, binds to the 23S rRNA. The polypeptide is Large ribosomal subunit protein uL15 (Bacillus cytotoxicus (strain DSM 22905 / CIP 110041 / 391-98 / NVH 391-98)).